The primary structure comprises 103 residues: Cyanovirin-N homolog (103 aa).

It belongs to the cyanovirin-N family.

In terms of biological role, mannose-binding lectin. The chain is Cyanovirin-N homolog from Tuber borchii (White truffle).